The primary structure comprises 331 residues: UPF0194 membrane protein YbhG (331 aa).

Residues 1–15 (MKKPVVIGLAVVVLA) form the signal peptide. Positions 107–208 (EEIAQAAAAV…LNLQDSTLIA (102 aa)) form a coiled coil.

This sequence belongs to the UPF0194 family.

The protein resides in the periplasm. This is UPF0194 membrane protein YbhG from Escherichia coli O139:H28 (strain E24377A / ETEC).